The primary structure comprises 254 residues: Probable electron transfer flavoprotein subunit beta (254 aa).

The protein belongs to the ETF beta-subunit/FixA family. Heterodimer of an alpha and a beta subunit. The cofactor is FAD. It depends on AMP as a cofactor.

Its subcellular location is the mitochondrion matrix. In terms of biological role, the electron transfer flavoprotein serves as a specific electron acceptor for several dehydrogenases, including five acyl-CoA dehydrogenases, glutaryl-CoA and sarcosine dehydrogenase. It transfers the electrons to the main mitochondrial respiratory chain via ETF-ubiquinone oxidoreductase (ETF dehydrogenase). In Schizosaccharomyces pombe (strain 972 / ATCC 24843) (Fission yeast), this protein is Probable electron transfer flavoprotein subunit beta.